We begin with the raw amino-acid sequence, 429 residues long: CBL-interacting serine/threonine-protein kinase 7 (429 aa).

A Protein kinase domain is found at 25–280; the sequence is YELGRRLGSG…IETVMKTNWF (256 aa). ATP is bound by residues 31 to 39 and K54; that span reads LGSGSFAKV. The active-site Proton acceptor is D149. Residues 167–195 form an activation loop region; the sequence is DFGLSALPEHLQNGLLHTACGTPAYTAPE. S171 is subject to Phosphoserine. The residue at position 184 (T184) is a Phosphothreonine. Positions 302-326 constitute an NAF domain; that stretch reads SSVNSITAFDLISLSSGLDLSGLFE. A PPI region spans residues 330–363; sequence KKERRFTAKVSGVEVEEKAKMIGEKLGYVVKKKM.

Belongs to the protein kinase superfamily. CAMK Ser/Thr protein kinase family. SNF1 subfamily. In terms of assembly, interacts with CBL1, CBL2 and CBL3. Mn(2+) serves as cofactor. Post-translationally, autophosphorylated. Strongly expressed in leaves, but barely expressed in roots, stems or flowers.

It carries out the reaction L-seryl-[protein] + ATP = O-phospho-L-seryl-[protein] + ADP + H(+). The enzyme catalyses L-threonyl-[protein] + ATP = O-phospho-L-threonyl-[protein] + ADP + H(+). Its function is as follows. CIPK serine-threonine protein kinases interact with CBL proteins. Binding of a CBL protein to the regulatory NAF domain of CIPK protein lead to the activation of the kinase in a calcium-dependent manner. Phosphorylates the rice sucrose synthase (SuSy) in vitro in an allosteric manner. Involved in cold response. The protein is CBL-interacting serine/threonine-protein kinase 7 (CIPK7) of Arabidopsis thaliana (Mouse-ear cress).